A 332-amino-acid chain; its full sequence is tRNA U34 carboxymethyltransferase (332 aa).

Residues Lys-96, Trp-110, Lys-115, Gly-135, 157–159 (DPT), 190–191 (IE), Met-205, Tyr-209, and Arg-324 contribute to the carboxy-S-adenosyl-L-methionine site.

The protein belongs to the class I-like SAM-binding methyltransferase superfamily. CmoB family. As to quaternary structure, homotetramer.

The catalysed reaction is carboxy-S-adenosyl-L-methionine + 5-hydroxyuridine(34) in tRNA = 5-carboxymethoxyuridine(34) in tRNA + S-adenosyl-L-homocysteine + H(+). In terms of biological role, catalyzes carboxymethyl transfer from carboxy-S-adenosyl-L-methionine (Cx-SAM) to 5-hydroxyuridine (ho5U) to form 5-carboxymethoxyuridine (cmo5U) at position 34 in tRNAs. The chain is tRNA U34 carboxymethyltransferase from Alteromonas mediterranea (strain DSM 17117 / CIP 110805 / LMG 28347 / Deep ecotype).